We begin with the raw amino-acid sequence, 171 residues long: MGNELLSTARIYTFKIPDAYNNVIDFDQFKNKVILIVNVASLCGFTPQYKELQLLYEKYHERGLEILGFPCNQFGNQEPLQEEEIVESCRRNFGVSFPIMKKTKVNIDCDGHESELYKYLKSEKPGEVGFKGVRWNFEKFIVNRKGEVVARFNSLITPLQLEGFIEQLLSE.

The Cysteine sulfenic acid (-SOH) intermediate role is filled by C43. Residues C43 and C89 are joined by a disulfide bond.

Belongs to the glutathione peroxidase family. Interacts with CAP1 and probably YBP1.

It catalyses the reaction a hydroperoxide + [thioredoxin]-dithiol = an alcohol + [thioredoxin]-disulfide + H2O. In terms of biological role, involved in oxidative stress response and redox homeostasis. Functions as a sensor and transducer of hydroperoxide stress. In response to hydroperoxide stress it oxidizes (activates) the transcription activator CAP1, which is involved in transcription activation of genes of the oxidative stress response pathway. May also play a direct role in hydroperoxide scavenging. The enzyme is not required for the glutaredoxin-mediated antioxidant function. In the presence of peroxides, GPX3 is directly oxidized at Cys-43 to form a cysteine sulfenic acid (-SOH). Cys-43-SOH then forms either an intramolecular disulfide bond (Cys-43 with Cys-89) or a transient, intermolecular disulfide bond with 'Cys-446' of CAP1, which is further resolved into a CAP1 intramolecular disulfide bond ('Cys-303' with 'Cys-598'), which causes its nuclear accumulation and activation, and a reduced Cys-43 in GPX3. Required for C.albicans-mediated macrophage killing. The polypeptide is Glutathione peroxidase-like peroxiredoxin GPX3 (Candida albicans (strain SC5314 / ATCC MYA-2876) (Yeast)).